A 351-amino-acid chain; its full sequence is MQVEVKLKENAYKVYIDELEELEFDTKVFILSNPKISGLHLKTLLSKIKAKEISIATVKDGEEYKNLSTMEEILSQMFNSKLDRKSVLISFGGGVISDMGGFAASIYQRGIDFINIPTTLLACVDAAVGGKTGVNNNFGKNLIGTFYQPKAVYCESSFLKTLSSRELAAGMAEFIKMAAIFDDSMLDFIEKIDEKSFLNATCENEIFTQIIAKSIELKARVVEQDEKESGLRMLLNYGHTFAHVIENFTDYKLYLHGEAVAIGMVMANQLALNLGLLDKMQSQRIKDILLKFGLPISYKINSVDEFYEAFFMDKKSSNKKINFVLASPLGKGLIKGDISKEDIITTLREFQ.

NAD(+) is bound by residues 60-65, 94-98, 118-119, Lys131, Lys140, and 158-161; these read DGEEYK, GVISD, TT, and FLKT. Glu173, His239, and His256 together coordinate Zn(2+).

Belongs to the sugar phosphate cyclases superfamily. Dehydroquinate synthase family. Co(2+) serves as cofactor. It depends on Zn(2+) as a cofactor. NAD(+) is required as a cofactor.

It is found in the cytoplasm. It carries out the reaction 7-phospho-2-dehydro-3-deoxy-D-arabino-heptonate = 3-dehydroquinate + phosphate. The protein operates within metabolic intermediate biosynthesis; chorismate biosynthesis; chorismate from D-erythrose 4-phosphate and phosphoenolpyruvate: step 2/7. In terms of biological role, catalyzes the conversion of 3-deoxy-D-arabino-heptulosonate 7-phosphate (DAHP) to dehydroquinate (DHQ). In Campylobacter jejuni subsp. doylei (strain ATCC BAA-1458 / RM4099 / 269.97), this protein is 3-dehydroquinate synthase.